The following is a 1073-amino-acid chain: uncharacterized protein (1073 aa).

The signal sequence occupies residues 1 to 36; it reads MAEIIHHSNVFTWAFHVSEYDGAPLLLLGSFSSVAS. Asn132 carries N-linked (GlcNAc...) asparagine glycosylation. An ATP-binding site is contributed by 392–399; it reads ATAGIGKS. N-linked (GlcNAc...) asparagine glycosylation is found at Asn544, Asn632, Asn703, Asn732, and Asn953.

This is an uncharacterized protein from Schizosaccharomyces pombe (strain 972 / ATCC 24843) (Fission yeast).